A 472-amino-acid polypeptide reads, in one-letter code: DEAD-box ATP-dependent RNA helicase 58, chloroplastic (472 aa).

The N-terminal 54 residues, 1–54, are a transit peptide targeting the chloroplast; that stretch reads MASQLLNVPHLAFFPKISYASVFSTLKPSFFHSTSTRRALKSSPSSRIINLQAV. The Q motif signature appears at 76–104; that stretch reads RQICQGFVPEHILHRMEEIGFVFPTDIQR. The 180-residue stretch at 107 to 286 folds into the Helicase ATP-binding domain; it reads LPTLFTGRDC…DCIQQKWTKR (180 aa). Residue 120–127 participates in ATP binding; that stretch reads AQTGSGKT. Residues 231–234 carry the DEAD box motif; the sequence is DEVD. Positions 314 to 472 constitute a Helicase C-terminal domain; the sequence is NKHQVLLALL…LMFSCEEMML (159 aa).

It belongs to the DEAD box helicase family.

The protein resides in the plastid. The protein localises to the chloroplast. The catalysed reaction is ATP + H2O = ADP + phosphate + H(+). In Arabidopsis thaliana (Mouse-ear cress), this protein is DEAD-box ATP-dependent RNA helicase 58, chloroplastic (RH58).